A 92-amino-acid polypeptide reads, in one-letter code: Protease inhibitors (92 aa).

An N-terminal signal peptide occupies residues 1–19 (MKFALALCAAVLLVVLVQA). Pacifastin domains lie at 20 to 54 (EEKC…CQPA) and 57 to 92 (EISC…CPNQ). 6 cysteine pairs are disulfide-bonded: cysteine 23/cysteine 38, cysteine 33/cysteine 51, cysteine 36/cysteine 46, cysteine 60/cysteine 75, cysteine 70/cysteine 89, and cysteine 73/cysteine 84. Threonine 65 is a glycosylation site (O-linked (Fuc) threonine).

Belongs to the protease inhibitor I19 family. As to expression, brain and fat body.

The protein resides in the secreted. In terms of biological role, both LCMI I and II are inhibitors of chymotrypsin and elastase (in vitro). They both inhibit the prophenol oxidase activation cascade. This chain is Protease inhibitors, found in Locusta migratoria (Migratory locust).